Reading from the N-terminus, the 432-residue chain is MKFKSELEQAIIATVQQEVVPALGCTEPVSLALAAAVARQYLGALPDRIEAKVSPNLMKNGMGVTVPGTGTVGLTMAAAIGAIGGDPNGGLEVLKHITNEQVALAKQMINDHKIEVSISDTEHILYSEATLFNTDQQVKVRIAAHHTNVIYIEKNGELLFSKPCVVESENAENVFANLNAKDIYDFSLNVELEKIRFIQQAAILNSALSQEGLNQDYGLHIGRTLQKQIGKGLISDDLLNRIVIETTAASDARMGGANLPAMSNSGSGNQGITATMPVVVVARHVAAGEEQLIRALFLSHLMAIYIHSKLPKLSALCAVTTAAMGSCAGVAWLLTGKFEAISMAISSMIGDISGIICDGAANSCAMKVSTSVSSSYKSILMALDDTQVTGNEGIVEHQIDRSINNLCAIASRSMQYTDRQVIEIMVSKPKSL.

The protein belongs to the UPF0597 family.

This Actinobacillus pleuropneumoniae serotype 5b (strain L20) protein is UPF0597 protein APL_1605.